A 185-amino-acid polypeptide reads, in one-letter code: Lipid A acyltransferase PagP (185 aa).

Residues 1-24 form the signal peptide; it reads MKTHNDILAALAALPLFLTGAAFA. Residues His57, Asp100, and Ser101 contribute to the active site.

The protein belongs to the lipid A palmitoyltransferase family. As to quaternary structure, homodimer.

The protein localises to the cell outer membrane. The enzyme catalyses a lipid A + a 1,2-diacyl-sn-glycero-3-phosphocholine = a hepta-acyl lipid A + a 2-acyl-sn-glycero-3-phosphocholine. The catalysed reaction is a lipid IVA + a 1,2-diacyl-sn-glycero-3-phosphocholine = a lipid IVB + a 2-acyl-sn-glycero-3-phosphocholine. It catalyses the reaction a lipid IIA + a 1,2-diacyl-sn-glycero-3-phosphocholine = a lipid IIB + a 2-acyl-sn-glycero-3-phosphocholine. Transfers a fatty acid residue from the sn-1 position of a phospholipid to the N-linked hydroxyfatty acid chain on the proximal unit of lipid A or its precursors. This is Lipid A acyltransferase PagP from Edwardsiella tarda (strain FL6-60).